The sequence spans 1218 residues: DNA-directed RNA polymerase subunit beta' (1218 aa).

Residues C60, C62, C75, and C78 each contribute to the Zn(2+) site. Residues D455, D457, and D459 each coordinate Mg(2+). Zn(2+)-binding residues include C824, C897, C904, and C907. Positions 1195–1218 (ENEAQSDKSQDEQEIGEITVDMGE) are disordered.

Belongs to the RNA polymerase beta' chain family. In terms of assembly, the RNAP catalytic core consists of 2 alpha, 1 beta, 1 beta' and 1 omega subunit. When a sigma factor is associated with the core the holoenzyme is formed, which can initiate transcription. Mg(2+) is required as a cofactor. Zn(2+) serves as cofactor.

The enzyme catalyses RNA(n) + a ribonucleoside 5'-triphosphate = RNA(n+1) + diphosphate. In terms of biological role, DNA-dependent RNA polymerase catalyzes the transcription of DNA into RNA using the four ribonucleoside triphosphates as substrates. This chain is DNA-directed RNA polymerase subunit beta', found in Natranaerobius thermophilus (strain ATCC BAA-1301 / DSM 18059 / JW/NM-WN-LF).